The following is an 80-amino-acid chain: MAGGPRRGGRRRKKVCYFTANGITHIDYKDTDLLKRFISERGKILPRRVTGTSAKYQRMLTTAIKRARHMALLPYVKEEN.

It belongs to the bacterial ribosomal protein bS18 family. Part of the 30S ribosomal subunit. Forms a tight heterodimer with protein bS6.

In terms of biological role, binds as a heterodimer with protein bS6 to the central domain of the 16S rRNA, where it helps stabilize the platform of the 30S subunit. The chain is Small ribosomal subunit protein bS18 from Staphylococcus carnosus (strain TM300).